The sequence spans 440 residues: UDP-N-acetylmuramoylalanine--D-glutamate ligase (440 aa).

An ATP-binding site is contributed by 115–121; that stretch reads GSNGKST.

It belongs to the MurCDEF family.

Its subcellular location is the cytoplasm. The enzyme catalyses UDP-N-acetyl-alpha-D-muramoyl-L-alanine + D-glutamate + ATP = UDP-N-acetyl-alpha-D-muramoyl-L-alanyl-D-glutamate + ADP + phosphate + H(+). It participates in cell wall biogenesis; peptidoglycan biosynthesis. Functionally, cell wall formation. Catalyzes the addition of glutamate to the nucleotide precursor UDP-N-acetylmuramoyl-L-alanine (UMA). This Vibrio cholerae serotype O1 (strain ATCC 39315 / El Tor Inaba N16961) protein is UDP-N-acetylmuramoylalanine--D-glutamate ligase.